Reading from the N-terminus, the 303-residue chain is Sulfotransferase 6B1 (303 aa).

Residue 65 to 70 (KCGSNW) coordinates 3'-phosphoadenylyl sulfate. The active-site Proton acceptor is His118. 3'-phosphoadenylyl sulfate contacts are provided by residues Arg140, Ser148, Tyr203, 237–242 (STFLAM), and 259–261 (RKG).

The protein belongs to the sulfotransferase 1 family. Expressed in brain, heart, kidney, thymus, lung, liver and testis.

The protein localises to the cytoplasm. It is found in the cytosol. It carries out the reaction thyroxine + 3'-phosphoadenylyl sulfate = thyroxine sulfate + adenosine 3',5'-bisphosphate + H(+). Functionally, sulfotransferase that utilizes 3'-phospho-5'-adenylyl sulfate (PAPS) as sulfonate donor to catalyze the sulfate conjugation of thyroxine. Involved in the metabolism of thyroxine. In Mus musculus (Mouse), this protein is Sulfotransferase 6B1 (Sult6b1).